Reading from the N-terminus, the 459-residue chain is Adenylosuccinate synthetase isozyme 1 C (459 aa).

Positions 1–31 (MSFSWSAKDHKSYTNPPSNPTQGLKRPRNDT) are disordered. The span at 13-22 (YTNPPSNPTQ) shows a compositional bias: polar residues. GTP contacts are provided by residues 44 to 50 (GDEGKGK) and 72 to 74 (GHT). Asp45 acts as the Proton acceptor in catalysis. Residues Asp45 and Gly72 each coordinate Mg(2+). Asp45 provides a ligand contact to substrate. IMP contacts are provided by residues 45-48 (DEGK), 70-73 (NAGH), Thr165, Arg179, Asn258, Thr273, and Arg337. The active-site Proton donor is the His73. 333–339 (VTTGRKR) is a substrate binding site. Residues Arg339, 365-367 (KLD), and 447-450 (GVGK) contribute to the GTP site.

It belongs to the adenylosuccinate synthetase family. Homodimer. It depends on Mg(2+) as a cofactor.

The protein localises to the cytoplasm. The enzyme catalyses IMP + L-aspartate + GTP = N(6)-(1,2-dicarboxyethyl)-AMP + GDP + phosphate + 2 H(+). It functions in the pathway purine metabolism; AMP biosynthesis via de novo pathway; AMP from IMP: step 1/2. Component of the purine nucleotide cycle (PNC), which interconverts IMP and AMP to regulate the nucleotide levels in various tissues, and which contributes to glycolysis and ammoniagenesis. Catalyzes the first committed step in the biosynthesis of AMP from IMP. The sequence is that of Adenylosuccinate synthetase isozyme 1 C (adss1c) from Salmo salar (Atlantic salmon).